A 524-amino-acid polypeptide reads, in one-letter code: Gamma-taxilin (524 aa).

Positions 1-10 (MATRLEEVTR) are enriched in basic and acidic residues. Disordered regions lie at residues 1–37 (MATRLEEVTRGRGGGTEEASEGGRGGRRRSPPQKFEI) and 64–86 (LQHQDPSCGGTTKKHSLEGDEGS). An omega-N-methylarginine mark is found at R12 and R24. Phosphoserine is present on residues S79, S86, and S97. Over residues 106–115 (REEIPGREAR) the composition is skewed to basic and acidic residues. A disordered region spans residues 106-130 (REEIPGREARTGPPDGQQDSECSRN). The stretch at 153 to 465 (EEKLAALCKK…KEQVSIKAAD (313 aa)) forms a coiled coil. Phosphotyrosine is present on Y283. Residues 501-524 (VCEKSAAQKPSSSGSPAQGIESVD) are disordered. Position 512 is a phosphoserine (S512).

The protein belongs to the taxilin family. As to quaternary structure, binds to the C-terminal coiled coil region of syntaxin family members STX1A, STX3A and STX4A. Forms a heterodimer with ATF4 in osteoblasts.

Its subcellular location is the nucleus membrane. The protein localises to the cytoplasm. It is found in the cytosol. In terms of biological role, may be involved in intracellular vesicle traffic. Inhibits ATF4-mediated transcription, possibly by dimerizing with ATF4 to form inactive dimers that cannot bind DNA. May be involved in regulating bone mass density through an ATF4-dependent pathway. May be involved in cell cycle progression. The polypeptide is Gamma-taxilin (Txlng) (Mus musculus (Mouse)).